Reading from the N-terminus, the 234-residue chain is HTH-type transcriptional regulator SmoD (234 aa).

Positions 8 to 76 (LPMYMQIAEM…QGSGNYIRAV (69 aa)) constitute an HTH gntR-type domain. The segment at residues 36–55 (ERDMAADLGIAVGTLRKSLA) is a DNA-binding region (H-T-H motif).

It localises to the cytoplasm. Probably regulates expression of genes involved in the sulfoquinovose monooxygenase (sulfo-SMO) pathway (smoABCDEFGHI). The sequence is that of HTH-type transcriptional regulator SmoD from Agrobacterium fabrum (strain C58 / ATCC 33970) (Agrobacterium tumefaciens (strain C58)).